We begin with the raw amino-acid sequence, 638 residues long: DNA gyrase subunit B (638 aa).

The 115-residue stretch at 431–545 (RELFIVEGNS…YGFVYIAQPP (115 aa)) folds into the Toprim domain. The Mg(2+) site is built by E437, D510, and D512.

It belongs to the type II topoisomerase GyrB family. As to quaternary structure, heterotetramer, composed of two GyrA and two GyrB chains. In the heterotetramer, GyrA contains the active site tyrosine that forms a transient covalent intermediate with DNA, while GyrB binds cofactors and catalyzes ATP hydrolysis. The cofactor is Mg(2+). It depends on Mn(2+) as a cofactor. Ca(2+) is required as a cofactor.

It is found in the cytoplasm. The enzyme catalyses ATP-dependent breakage, passage and rejoining of double-stranded DNA.. A type II topoisomerase that negatively supercoils closed circular double-stranded (ds) DNA in an ATP-dependent manner to modulate DNA topology and maintain chromosomes in an underwound state. Negative supercoiling favors strand separation, and DNA replication, transcription, recombination and repair, all of which involve strand separation. Also able to catalyze the interconversion of other topological isomers of dsDNA rings, including catenanes and knotted rings. Type II topoisomerases break and join 2 DNA strands simultaneously in an ATP-dependent manner. This chain is DNA gyrase subunit B, found in Metamycoplasma arthritidis (Mycoplasma arthritidis).